Reading from the N-terminus, the 144-residue chain is Large ribosomal subunit protein uL16 (144 aa).

Belongs to the universal ribosomal protein uL16 family. As to quaternary structure, part of the 50S ribosomal subunit.

Binds 23S rRNA and is also seen to make contacts with the A and possibly P site tRNAs. This chain is Large ribosomal subunit protein uL16, found in Ligilactobacillus salivarius (strain UCC118) (Lactobacillus salivarius).